The primary structure comprises 227 residues: Ribonuclease 3 (227 aa).

Positions 5–127 constitute an RNase III domain; sequence YQKLSRRIGY…IIGAMYLDAG (123 aa). Mg(2+) is bound at residue E40. Residue D44 is part of the active site. Positions 113 and 116 each coordinate Mg(2+). The active site involves E116. One can recognise a DRBM domain in the interval 154 to 224; that stretch reads DAKTRLQEFL…AAKALKKLEK (71 aa).

Belongs to the ribonuclease III family. In terms of assembly, homodimer. Mg(2+) is required as a cofactor.

It is found in the cytoplasm. It carries out the reaction Endonucleolytic cleavage to 5'-phosphomonoester.. In terms of biological role, digests double-stranded RNA. Involved in the processing of primary rRNA transcript to yield the immediate precursors to the large and small rRNAs (23S and 16S). Processes some mRNAs, and tRNAs when they are encoded in the rRNA operon. Processes pre-crRNA and tracrRNA of type II CRISPR loci if present in the organism. The protein is Ribonuclease 3 of Marinomonas sp. (strain MWYL1).